A 185-amino-acid polypeptide reads, in one-letter code: Elongation factor P (185 aa).

It belongs to the elongation factor P family.

The protein localises to the cytoplasm. The protein operates within protein biosynthesis; polypeptide chain elongation. In terms of biological role, involved in peptide bond synthesis. Stimulates efficient translation and peptide-bond synthesis on native or reconstituted 70S ribosomes in vitro. Probably functions indirectly by altering the affinity of the ribosome for aminoacyl-tRNA, thus increasing their reactivity as acceptors for peptidyl transferase. The sequence is that of Elongation factor P from Nitratidesulfovibrio vulgaris (strain DP4) (Desulfovibrio vulgaris).